The primary structure comprises 614 residues: Aspartate--tRNA ligase (614 aa).

L-aspartate is bound at residue Glu174. The tract at residues Gln198 to Lys201 is aspartate. Arg220 contributes to the L-aspartate binding site. ATP is bound by residues Arg220–Glu222 and Gln229. His448 lines the L-aspartate pocket. Glu482 contributes to the ATP binding site. Residue Arg489 participates in L-aspartate binding. Residue Gly534 to Arg537 coordinates ATP. The tract at residues Tyr587–Glu614 is disordered.

Belongs to the class-II aminoacyl-tRNA synthetase family. Type 1 subfamily. As to quaternary structure, homodimer.

The protein localises to the cytoplasm. The enzyme catalyses tRNA(Asp) + L-aspartate + ATP = L-aspartyl-tRNA(Asp) + AMP + diphosphate. Catalyzes the attachment of L-aspartate to tRNA(Asp) in a two-step reaction: L-aspartate is first activated by ATP to form Asp-AMP and then transferred to the acceptor end of tRNA(Asp). This chain is Aspartate--tRNA ligase, found in Lactobacillus johnsonii (strain CNCM I-12250 / La1 / NCC 533).